The chain runs to 280 residues: MLKDMFSKKKRYATIPSERAKQEVPEGIMTKCPSCRTIMYTKDLKKNLSVCRTCGHHHRMSARERIDSIIDDGTFKEAFASVKGGNPLQFPGYEEKLESDRKKTGLNEAVVTGEGKINGYPVVIAVMDPNFRMASMGSAVGEKLTRAIELATETSVPLLIFAASGGARMQEGMLSLMQMAKTSAALERLNRAGGLYISVMTNPTTGGVSASFASLGDYNFAEPKALIGFAGRRIIEQTIRQELPEDFQTAEFLLEHGQLDRVIPRLEMKETLTKLLAMHQ.

The CoA carboxyltransferase N-terminal domain maps to 28–280 (IMTKCPSCRT…TLTKLLAMHQ (253 aa)). Positions 32, 35, 51, and 54 each coordinate Zn(2+). The C4-type zinc finger occupies 32–54 (CPSCRTIMYTKDLKKNLSVCRTC).

It belongs to the AccD/PCCB family. In terms of assembly, acetyl-CoA carboxylase is a heterohexamer composed of biotin carboxyl carrier protein (AccB), biotin carboxylase (AccC) and two subunits each of ACCase subunit alpha (AccA) and ACCase subunit beta (AccD). Requires Zn(2+) as cofactor.

The protein localises to the cytoplasm. It catalyses the reaction N(6)-carboxybiotinyl-L-lysyl-[protein] + acetyl-CoA = N(6)-biotinyl-L-lysyl-[protein] + malonyl-CoA. The protein operates within lipid metabolism; malonyl-CoA biosynthesis; malonyl-CoA from acetyl-CoA: step 1/1. Component of the acetyl coenzyme A carboxylase (ACC) complex. Biotin carboxylase (BC) catalyzes the carboxylation of biotin on its carrier protein (BCCP) and then the CO(2) group is transferred by the transcarboxylase to acetyl-CoA to form malonyl-CoA. The polypeptide is Acetyl-coenzyme A carboxylase carboxyl transferase subunit beta (Shouchella clausii (strain KSM-K16) (Alkalihalobacillus clausii)).